We begin with the raw amino-acid sequence, 377 residues long: uncharacterized protein (377 aa).

This is an uncharacterized protein from Bacillus subtilis (strain 168).